The following is a 518-amino-acid chain: Putative transposase for insertion sequence IS408 (518 aa).

The 84-residue stretch at 11-94 (LKEVLRLKWA…PDYTALHREL (84 aa)) folds into the HTH IS408-type domain. The H-T-H motif DNA-binding region spans 23-44 (LTHRQISRAIGISVGAVSKFAA). Residues 140 to 335 (QQHRAGEKLF…LPVRRYEIAT (196 aa)) form the Integrase catalytic domain. The disordered stretch occupies residues 496–518 (LPTTPAEWRSPEHENVRGPDYYH). A compositionally biased stretch (basic and acidic residues) spans 504-518 (RSPEHENVRGPDYYH).

The protein belongs to the transposase IS21/IS408/IS1162 family.

Its function is as follows. Required for the transposition of the insertion element. This chain is Putative transposase for insertion sequence IS408, found in Burkholderia multivorans (strain ATCC 17616 / 249).